A 285-amino-acid polypeptide reads, in one-letter code: Ubiquinone biosynthesis protein COQ4, mitochondrial (285 aa).

The transit peptide at 1 to 11 directs the protein to the mitochondrion; that stretch reads MPPTVRQGIRT. Residues histidine 166, aspartate 167, histidine 170, and glutamate 182 each coordinate Zn(2+).

It belongs to the COQ4 family. As to quaternary structure, component of a multi-subunit COQ enzyme complex, composed of at least COQ3, COQ4, COQ5, COQ6, COQ7 and COQ9. The cofactor is Zn(2+).

The protein localises to the mitochondrion inner membrane. It carries out the reaction a 4-hydroxy-3-methoxy-5-(all-trans-polyprenyl)benzoate + H(+) = a 2-methoxy-6-(all-trans-polyprenyl)phenol + CO2. It functions in the pathway cofactor biosynthesis; ubiquinone biosynthesis. In terms of biological role, lyase that catalyzes the C1-decarboxylation of 4-hydroxy-3-methoxy-5-(all-trans-polyprenyl)benzoic acid into 2-methoxy-6-(all-trans-polyprenyl)phenol during ubiquinone biosynthesis. The polypeptide is Ubiquinone biosynthesis protein COQ4, mitochondrial (Paracoccidioides brasiliensis (strain Pb18)).